A 603-amino-acid chain; its full sequence is Vacuolar protein sorting-associated protein 33A (603 aa).

Belongs to the STXBP/unc-18/SEC1 family. Probable component of the homotypic fusion and vacuole protein sorting (HOPS) complex consisting of the core class C Vps proteins vps-11, vps-16, vps-18, and which further associates with vps-33.1, vps-39 and vps-41. Interacts with spe-39. Ubiquitously expressed at high levels in somatic tissues including the pharynx, muscles, hypodermis, neurons, coelomocytes and spermatheca. Expressed in the intestine.

The protein localises to the lysosome. It localises to the early endosome. Its subcellular location is the late endosome. The protein resides in the apical cell membrane. Plays a role in vesicle-mediated protein trafficking to lysosomal compartments including the endocytic membrane transport pathways. Believed to act as a component of the putative HOPS endosomal tethering complex which is proposed to be involved in the rab-5-to-rab-7 endosome conversion probably implicating sand-1, and via binding SNAREs and SNARE complexes to mediate tethering and docking events during SNARE-mediated membrane fusion. The HOPS complex is proposed to be recruited to rab-7 on the late endosomal membrane and to regulate late endocytic, phagocytic and autophagic traffic towards lysosomes. Within the HOPS complex, contributes to the normal development of gut granules in embryonic and adult intestinal cells. Required for endosome/lysosome fusion. Required for early embryonic development. This is Vacuolar protein sorting-associated protein 33A from Caenorhabditis elegans.